Here is a 340-residue protein sequence, read N- to C-terminus: Protein-arginine kinase (340 aa).

The region spanning 21–242 (VVLSSRIRLA…EQIIMQERIA (222 aa)) is the Phosphagen kinase C-terminal domain. ATP is bound by residues 24-28 (SSRIR), histidine 79, arginine 113, 164-168 (RASVM), and 195-200 (RGIYGE).

It belongs to the ATP:guanido phosphotransferase family.

It carries out the reaction L-arginyl-[protein] + ATP = N(omega)-phospho-L-arginyl-[protein] + ADP + H(+). Catalyzes the specific phosphorylation of arginine residues in proteins. This chain is Protein-arginine kinase, found in Listeria monocytogenes serotype 4a (strain HCC23).